The sequence spans 225 residues: O-methyltransferase rstn1 (225 aa).

S-adenosyl-L-methionine is bound by residues Gln97 and His142.

The protein belongs to the methyltransferase superfamily.

The enzyme catalyses desmethylrestrictinol + S-adenosyl-L-methionine = restrictinol + S-adenosyl-L-homocysteine + H(+). Its pathway is antifungal biosynthesis. O-methyltransferase; part of the gene cluster that mediates the biosynthesis of the tetrahydropyranyl antifungal agent restricticin that acts as an inhibitor of CYP51 and blocks the ergosterol biosynthesis. Within the pathway, rstn1 uses S-adenosylmethionine to methylate position C4 of desmethylrestrictinol to produce restrictinol. The highly reducing polyketide synthase rstn3, the short chain dehydrogenase rstn4, the cyclase rstn5, the FAD-dependent monooxygenase rstn6 and the enoylreductase rstn7 are required to generate the first stable intermediate desmethylrestrictinol. Rstn3 with rstn7 biosynthesize the first polyketide chain intermediate that is reduced by rstn4, followed by epoxidation by rstn6 before 6-endo cyclization via epoxide opening by rstn5 leads to desmethylrestrictinol. The methyltransferase rstn1 then catalyzes the C4 O-methylation of desmethylrestrictinol to produce restrictinol, and the nonribosomal peptide synthetase rstn8 catalyzes the C3 esterification of restrictinol with glycine that leads to restricticin. In Aspergillus nomiae NRRL (strain ATCC 15546 / NRRL 13137 / CBS 260.88 / M93), this protein is O-methyltransferase rstn1.